A 202-amino-acid polypeptide reads, in one-letter code: Response regulator RamR (202 aa).

The response regulatory stretch occupies residues 1 to 121 (MGEMVRIAVV…LITAVHTVAR (121 aa)). The region spanning 135-200 (LKGAEMPLTT…DAIRIVQSAG (66 aa)) is the HTH luxR-type domain. The H-T-H motif DNA-binding region spans 159–178 (IAEIAARLHLSRGTVRNYMA).

As to quaternary structure, homodimer, in the absence of phosphorylation. May be phosphorylated by an unknown kinase, probably on Asp-56.

In terms of biological role, a transcription factor required for aerial hyphae formation on rich medium. Activates transcription of ramC. Might be part of a two-component regulatory system. Binds the promoter of ramC. Non-phosphorylated protein cooperatively binds multiple sites in the ramC promoter. Has not been seen to autophosphorylate using the small molecule phosphodonors phosphoramidate, acetyl phosphate or carbamoyl phosphate. Upon low expression suppresses the bald (bld, no aerial hyphae) phenotype of citA but not bldJ mutants; higher expression also suppresses the bldJ mutant as well as several other bld mutations, inducing SapB production even on media where SapB is normally not produced. Expression of the ram locus (ramA, ramB and ramR) induces rapid aerial mycelium formation in S.lividans. Overexpression suppresses the no aerial hyphae phenotype of a chaplin-negative strain, probably by inducing expression of SapB. Overexpression of RamR show there are about 280 genes having at least a threefold increase or fourfold decrease in RNA abundance versus wild-type including gene cluster SCO4072-SCO4075. This Streptomyces coelicolor (strain ATCC BAA-471 / A3(2) / M145) protein is Response regulator RamR.